The following is a 372-amino-acid chain: Alanine dehydrogenase 1 (372 aa).

H94 is an active-site residue. 170 to 200 (TYVIFGGGVAATNAANVALGLNAKVIIIELN) contacts NAD(+).

The protein belongs to the AlaDH/PNT family.

It catalyses the reaction L-alanine + NAD(+) + H2O = pyruvate + NH4(+) + NADH + H(+). Its pathway is amino-acid degradation; L-alanine degradation via dehydrogenase pathway; NH(3) and pyruvate from L-alanine: step 1/1. In terms of biological role, may play a role in cell wall synthesis as L-alanine is an important constituent of the peptidoglycan layer. In Staphylococcus aureus (strain NCTC 8325 / PS 47), this protein is Alanine dehydrogenase 1 (ald1).